The chain runs to 212 residues: uncharacterized protein (212 aa).

Residues 11–31 (NLIFFQFIVYFFFISLTILII) form a helical membrane-spanning segment.

It is found in the membrane. This is an uncharacterized protein from Rickettsia prowazekii (strain Madrid E).